The following is a 1749-amino-acid chain: E3 ubiquitin-protein ligase UBR1 (1749 aa).

Position 2 is an N-acetylalanine (A2). T21 bears the Phosphothreonine mark. The UBR-type zinc finger occupies 97–168; it reads QLCGRVFKSG…TGPFCVNHEP (72 aa). 7 residues coordinate Zn(2+): C99, C112, C115, C124, C127, H133, and H136. F148 contributes to the a peptide binding site. A Zn(2+)-binding site is contributed by C149. An a peptide-binding site is contributed by D150. A Zn(2+)-binding site is contributed by C151. A peptide is bound at residue D153. Residues C163 and H166 each contribute to the Zn(2+) site. The tract at residues 842–868 is disordered; that stretch reads QHSKAEHMQKKRRKQENKDEALPPPPP. The interval 1019-1054 is UBC2-binding region (U2BR); that stretch reads RKRKAEAARLHRQKIMAQMSALQKNFIETHKLMYDN. Zn(2+) is bound by residues C1098, C1101, C1159, H1161, H1164, and C1167. Residues 1098 to 1201 form an RING-type; atypical zinc finger; the sequence is CILCQEEQEV…SGEYLCPLCK (104 aa). At S1179 the chain carries Phosphoserine. C1197, C1200, C1627, C1630, and C1653 together coordinate Zn(2+).

The protein belongs to the E3 ubiquitin-protein ligase UBR1-like family. As to quaternary structure, interacts with RECQL4. As to expression, broadly expressed, with highest levels in skeletal muscle, kidney and pancreas. Present in acinar cells of the pancreas (at protein level).

It localises to the cytoplasm. The protein resides in the cytosol. The catalysed reaction is S-ubiquitinyl-[E2 ubiquitin-conjugating enzyme]-L-cysteine + [acceptor protein]-L-lysine = [E2 ubiquitin-conjugating enzyme]-L-cysteine + N(6)-ubiquitinyl-[acceptor protein]-L-lysine.. It functions in the pathway protein modification; protein ubiquitination. With respect to regulation, inhibited by the small-molecule compound RF-C11, which bears two heterovalent ligands: RF-C11 inhibits activity toward both type-1 and type-2 N-degrons. E3 ubiquitin-protein ligase which is a component of the N-end rule pathway. Recognizes and binds proteins bearing specific N-terminal residues that are destabilizing according to the N-end rule, leading to their ubiquitination and subsequent degradation. Recognizes both type-1 and type-2 N-degrons, containing positively charged amino acids (Arg, Lys and His) and bulky and hydrophobic amino acids, respectively. Does not ubiquitinate proteins that are acetylated at the N-terminus. In contrast, it strongly binds methylated N-degrons. Binds leucine and is a negative regulator of the leucine-mTOR signaling pathway, thereby controlling cell growth. The protein is E3 ubiquitin-protein ligase UBR1 of Homo sapiens (Human).